The following is a 179-amino-acid chain: tRNA-splicing endonuclease (179 aa).

Residues tyrosine 115, histidine 125, and lysine 156 contribute to the active site.

It belongs to the tRNA-intron endonuclease family. Archaeal short subfamily. As to quaternary structure, homotetramer; although the tetramer contains four active sites, only two participate in the cleavage. Therefore, it should be considered as a dimer of dimers.

It carries out the reaction pretRNA = a 3'-half-tRNA molecule with a 5'-OH end + a 5'-half-tRNA molecule with a 2',3'-cyclic phosphate end + an intron with a 2',3'-cyclic phosphate and a 5'-hydroxyl terminus.. Functionally, endonuclease that removes tRNA introns. Cleaves pre-tRNA at the 5'- and 3'-splice sites to release the intron. The products are an intron and two tRNA half-molecules bearing 2',3' cyclic phosphate and 5'-OH termini. Recognizes a pseudosymmetric substrate in which 2 bulged loops of 3 bases are separated by a stem of 4 bp. This chain is tRNA-splicing endonuclease (endA), found in Methanocaldococcus jannaschii (strain ATCC 43067 / DSM 2661 / JAL-1 / JCM 10045 / NBRC 100440) (Methanococcus jannaschii).